The following is a 555-amino-acid chain: Protein PLASTID TRANSCRIPTIONALLY ACTIVE 12, chloroplastic (555 aa).

The transit peptide at 1 to 58 (MASCYNPWRLFPGMSTAVPAGPVTAPAHSRTCKSSKVFSALPHRRGLLFLGTRRARIK) directs the protein to the chloroplast. 3 disordered regions span residues 80-100 (YFDSTSGQLEPASGARASIPG), 115-167 (ARAP…EPDV), and 468-541 (SYNE…IDDS). The segment covering 144-154 (QVTSASGTEGA) has biased composition (polar residues). Acidic residues-rich tracts occupy residues 471-480 (EDSDDEDEDV) and 490-502 (LEDEEDDRDDVAE). A compositionally biased stretch (polar residues) spans 508-519 (NQNWSALKSTGQ). Residues 521 to 538 (EKPKEKSKKDEMTLKEAI) show a composition bias toward basic and acidic residues.

As to quaternary structure, component of the plastid-encoded plastid RNA polymerase (PEP) complex.

It is found in the plastid. Its subcellular location is the chloroplast stroma. The protein resides in the nucleus. Its function is as follows. Required for the activity of the plastid-encoded RNA polymerase (PEP) and full expression of genes transcribed by PEP. Required for the proper build-up and formation of the PEP-complex. Binds single-stranded (ss) DNA and RNA, but not double-stranded (ds) DNA. The polypeptide is Protein PLASTID TRANSCRIPTIONALLY ACTIVE 12, chloroplastic (Zea mays (Maize)).